Reading from the N-terminus, the 436-residue chain is Probable 4-aminobutyrate aminotransferase (436 aa).

Position 281 is an N6-(pyridoxal phosphate)lysine (Lys281).

Belongs to the class-III pyridoxal-phosphate-dependent aminotransferase family. Pyridoxal 5'-phosphate serves as cofactor.

The enzyme catalyses 4-aminobutanoate + 2-oxoglutarate = succinate semialdehyde + L-glutamate. The catalysed reaction is (S)-3-amino-2-methylpropanoate + 2-oxoglutarate = 2-methyl-3-oxopropanoate + L-glutamate. It participates in amino-acid degradation; 4-aminobutanoate degradation. The sequence is that of Probable 4-aminobutyrate aminotransferase (gabT) from Bacillus subtilis (strain 168).